The chain runs to 843 residues: Protein P (843 aa).

Positions 1–177 (MPLSYPHFRK…FCGSQYSWEQ (177 aa)) are terminal protein domain (TP). The segment at 178–346 (ELQHGSTSLN…YCLSHIINLL (169 aa)) is spacer. Disordered stretches follow at residues 228–255 (KQGQ…RWPA) and 284–314 (EANP…SVGS). Positions 239–249 (RSGRLRSRVHT) are enriched in basic residues. The tract at residues 347–690 (EDWGPCYEHG…YMNLYPVARQ (344 aa)) is polymerase/reverse transcriptase domain (RT). The 244-residue stretch at 357–600 (EHHIRTPRTP…YNLHFMGYVI (244 aa)) folds into the Reverse transcriptase domain. Mg(2+)-binding residues include Asp429, Asp551, and Asp552.

The protein belongs to the hepadnaviridae P protein family.

It catalyses the reaction DNA(n) + a 2'-deoxyribonucleoside 5'-triphosphate = DNA(n+1) + diphosphate. The enzyme catalyses Endonucleolytic cleavage to 5'-phosphomonoester.. Its activity is regulated as follows. Activated by host HSP70 and HSP40 in vitro to be able to bind the epsilon loop of the pgRNA. Because deletion of the RNase H region renders the protein partly chaperone-independent, the chaperones may be needed indirectly to relieve occlusion of the RNA-binding site by this domain. Inhibited by several reverse-transcriptase inhibitors: Lamivudine, Adefovir and Entecavir. Multifunctional enzyme that converts the viral RNA genome into dsDNA in viral cytoplasmic capsids. This enzyme displays a DNA polymerase activity that can copy either DNA or RNA templates, and a ribonuclease H (RNase H) activity that cleaves the RNA strand of RNA-DNA heteroduplexes in a partially processive 3'- to 5'-endonucleasic mode. Neo-synthesized pregenomic RNA (pgRNA) are encapsidated together with the P protein, and reverse-transcribed inside the nucleocapsid. Initiation of reverse-transcription occurs first by binding the epsilon loop on the pgRNA genome, and is initiated by protein priming, thereby the 5'-end of (-)DNA is covalently linked to P protein. Partial (+)DNA is synthesized from the (-)DNA template and generates the relaxed circular DNA (RC-DNA) genome. After budding and infection, the RC-DNA migrates in the nucleus, and is converted into a plasmid-like covalently closed circular DNA (cccDNA). The activity of P protein does not seem to be necessary for cccDNA generation, and is presumably released from (+)DNA by host nuclear DNA repair machinery. This is Protein P from Hepatitis B virus genotype F2 subtype adw4q (isolate Senegal/9203) (HBV-F).